A 305-amino-acid chain; its full sequence is Serine/threonine-protein kinase 16 (305 aa).

Gly2 carries N-myristoyl glycine lipidation. 2 S-palmitoyl cysteine lipidation sites follow: Cys6 and Cys8. A Protein kinase domain is found at 20-293 (YLFVQKLGEG…PVLLSQLEAL (274 aa)). Residues 26 to 34 (LGEGGFSYV) and Lys49 contribute to the ATP site. Asp148 (proton acceptor) is an active-site residue. An activation loop region spans residues 166 to 202 (DLGSMNQACIQVEGSRQALALQDWAAQRCTISYRAPE). Ser197 carries the phosphoserine; by autocatalysis modification. Tyr198 carries the post-translational modification Phosphotyrosine; by autocatalysis.

Belongs to the protein kinase superfamily. Ser/Thr protein kinase family. Monomer. Interacts with DRG1 (via its N-terminal); the interaction phosphorylates DRG1. Post-translationally, mainly autophosphorylated on serine/threonine residues. Also autophosphorylated on Tyr-198. Expressed in heart, liver, brain, spleen, lung, skeletal muscle, kidney and testis.

The protein resides in the cytoplasm. It localises to the perinuclear region. The protein localises to the membrane. It catalyses the reaction L-seryl-[protein] + ATP = O-phospho-L-seryl-[protein] + ADP + H(+). The catalysed reaction is L-threonyl-[protein] + ATP = O-phospho-L-threonyl-[protein] + ADP + H(+). It carries out the reaction L-tyrosyl-[protein] + ATP = O-phospho-L-tyrosyl-[protein] + ADP + H(+). Membrane-associated protein kinase that phosphorylates on serine and threonine residues. In vitro substrates include DRG1, ENO1 and EIF4EBP1. Also autophosphorylates. May be involved in secretory vesicle trafficking or intracellular signaling. May have a role in regulating stromal-epithelial interactions that occur during ductal morphogenesis in the mammary gland. May be involved in TGF-beta signaling. Able to autophosphorylate on Tyr residue; it is however unclear whether it has tyrosine-protein kinase toward other proteins. The chain is Serine/threonine-protein kinase 16 (Stk16) from Rattus norvegicus (Rat).